Here is a 176-residue protein sequence, read N- to C-terminus: MDENSTLSPAHSDAAASSSANTPPLPYVPSALAPFAGLWRGEGEGAYPTIDDFAYTEEIEFAPTGKPFLAYRSRTREAGSGRPLHSESGFLRLVGEDEAELLVAQPTGFTEIHRGQVREGTIELSMVVLSASPDAKPVHSIRRQLSVRGGDLTYDLWMAHDLTPLTHHLHGHLRRD.

A disordered region spans residues 1–23; sequence MDENSTLSPAHSDAAASSSANTP. The segment covering 8–20 has biased composition (low complexity); the sequence is SPAHSDAAASSSA. A GXWXGXG motif is present at residues 37–43; it reads GLWRGEG. His168 is a binding site for heme b.

It belongs to the nitrobindin family. Homodimer. Heme b serves as cofactor.

It catalyses the reaction peroxynitrite = nitrate. It functions in the pathway nitrogen metabolism. In terms of biological role, heme-binding protein able to scavenge peroxynitrite and to protect free L-tyrosine against peroxynitrite-mediated nitration, by acting as a peroxynitrite isomerase that converts peroxynitrite to nitrate. Therefore, this protein likely plays a role in peroxynitrite sensing and in the detoxification of reactive nitrogen and oxygen species (RNS and ROS, respectively). Is able to bind nitric oxide (NO) in vitro, but may act as a sensor of peroxynitrite levels in vivo. In Rhodococcus jostii (strain RHA1), this protein is Peroxynitrite isomerase 1.